The following is a 264-amino-acid chain: Thymidylate synthase (264 aa).

Arg-21 provides a ligand contact to dUMP. His-51 is a (6R)-5,10-methylene-5,6,7,8-tetrahydrofolate binding site. Residue 126–127 (RR) coordinates dUMP. Residue Cys-146 is the Nucleophile of the active site. DUMP-binding positions include 166–169 (RSAD), Asn-177, and 207–209 (HIY). Asp-169 serves as a coordination point for (6R)-5,10-methylene-5,6,7,8-tetrahydrofolate. Residue Ala-263 participates in (6R)-5,10-methylene-5,6,7,8-tetrahydrofolate binding.

This sequence belongs to the thymidylate synthase family. Bacterial-type ThyA subfamily. In terms of assembly, homodimer.

Its subcellular location is the cytoplasm. It catalyses the reaction dUMP + (6R)-5,10-methylene-5,6,7,8-tetrahydrofolate = 7,8-dihydrofolate + dTMP. Its pathway is pyrimidine metabolism; dTTP biosynthesis. Catalyzes the reductive methylation of 2'-deoxyuridine-5'-monophosphate (dUMP) to 2'-deoxythymidine-5'-monophosphate (dTMP) while utilizing 5,10-methylenetetrahydrofolate (mTHF) as the methyl donor and reductant in the reaction, yielding dihydrofolate (DHF) as a by-product. This enzymatic reaction provides an intracellular de novo source of dTMP, an essential precursor for DNA biosynthesis. This Brucella anthropi (strain ATCC 49188 / DSM 6882 / CCUG 24695 / JCM 21032 / LMG 3331 / NBRC 15819 / NCTC 12168 / Alc 37) (Ochrobactrum anthropi) protein is Thymidylate synthase.